A 444-amino-acid chain; its full sequence is MKHFEANFDGLVGPTHNYAGLSFGNVASLSNAALVSNPKAAAKQGLQKAKALADMGMVQGMLAPQERPDLYTLRRIGFSGSDANVLKQAAKEAPMLLNACCSASSMWTANAATVSPSADTRDGKLHFTPANLVDKLHRSIEPLTTGRILTATFSDPHYFHHHSHLPEHNSFGDEGAANHTRLCNEYGHAGVELFVYGQEATNPNAPKPQKYPARQTLEASMAVARLHQLEEDNCVFIQQNPDVIDQGVFHNDVIAVGNQNVLFYHEQAFLNTQHKIDEIKRKLDTELYFIEVPTAKVAINDAVKSYLFNTQIITLPSGEMVIVAPTDCQENPAVFAYLNELLTLNTPIKQVLYFDVKQSMQNGGGPACLRLRVAMNEMEVAAVNQHTLMNDALFARLNLWVDKHYRDRLTTQDLADPQLIIESRTALDELTQIMKLGSVYQFQR.

Substrate is bound by residues alanine 19 to serine 28, asparagine 110, and histidine 137 to arginine 138. Glutamate 174 is a catalytic residue. Arginine 214 provides a ligand contact to substrate. Histidine 250 is an active-site residue. The substrate site is built by aspartate 252 and asparagine 362. The active-site Nucleophile is the cysteine 368.

Belongs to the succinylarginine dihydrolase family. In terms of assembly, homodimer.

The catalysed reaction is N(2)-succinyl-L-arginine + 2 H2O + 2 H(+) = N(2)-succinyl-L-ornithine + 2 NH4(+) + CO2. It participates in amino-acid degradation; L-arginine degradation via AST pathway; L-glutamate and succinate from L-arginine: step 2/5. Functionally, catalyzes the hydrolysis of N(2)-succinylarginine into N(2)-succinylornithine, ammonia and CO(2). In Shewanella baltica (strain OS155 / ATCC BAA-1091), this protein is N-succinylarginine dihydrolase.